The sequence spans 432 residues: MSTANPASAPDSFFSASLEQADPEIAAAIRGELGRQRHEVELIASENIVSRAVLEAQGSVMTNKYAEGYPGNRYYGGCEFVDVAENLAIDRAKKLFGANFANVQPNSGSQMNQAVFLALLQPGDTFMGLDLAAGGHLTHGAPVNMSGKWFKPVHYTVRREDQMIDMDAVAKLAEEAKPKLIIAGGSAYPRAWDFKRFREIADSVGAYFMVDMAHFAGLVAGGVHASPVPHAHVTTTTTHKSLRGPRGGLILTNDEALAKKFNSAIFPGLQGGPLMHVIAAKAVAFKEALQPDFKVYTKNVVENAKALAETLRSAGFDLVSGGTDNHLMLVDLRPKGLKGNVSEKALVRAGITCNKNGIPFDPEKPFVTSGLRLGTPAATTRGFGVAEFQQVGHLIAEVLNAIAQSSDGAAPLVEASVKQRVKELTDRFPIYQ.

(6S)-5,6,7,8-tetrahydrofolate-binding positions include leucine 131 and glycine 135–leucine 137. Lysine 240 carries the post-translational modification N6-(pyridoxal phosphate)lysine.

This sequence belongs to the SHMT family. Homodimer. It depends on pyridoxal 5'-phosphate as a cofactor.

The protein localises to the cytoplasm. It carries out the reaction (6R)-5,10-methylene-5,6,7,8-tetrahydrofolate + glycine + H2O = (6S)-5,6,7,8-tetrahydrofolate + L-serine. The protein operates within one-carbon metabolism; tetrahydrofolate interconversion. It participates in amino-acid biosynthesis; glycine biosynthesis; glycine from L-serine: step 1/1. In terms of biological role, catalyzes the reversible interconversion of serine and glycine with tetrahydrofolate (THF) serving as the one-carbon carrier. This reaction serves as the major source of one-carbon groups required for the biosynthesis of purines, thymidylate, methionine, and other important biomolecules. Also exhibits THF-independent aldolase activity toward beta-hydroxyamino acids, producing glycine and aldehydes, via a retro-aldol mechanism. This Rhodopseudomonas palustris (strain ATCC BAA-98 / CGA009) protein is Serine hydroxymethyltransferase 1.